Reading from the N-terminus, the 479-residue chain is Aspartyl/glutamyl-tRNA(Asn/Gln) amidotransferase subunit B (479 aa).

It belongs to the GatB/GatE family. GatB subfamily. Heterotrimer of A, B and C subunits.

It carries out the reaction L-glutamyl-tRNA(Gln) + L-glutamine + ATP + H2O = L-glutaminyl-tRNA(Gln) + L-glutamate + ADP + phosphate + H(+). The catalysed reaction is L-aspartyl-tRNA(Asn) + L-glutamine + ATP + H2O = L-asparaginyl-tRNA(Asn) + L-glutamate + ADP + phosphate + 2 H(+). Allows the formation of correctly charged Asn-tRNA(Asn) or Gln-tRNA(Gln) through the transamidation of misacylated Asp-tRNA(Asn) or Glu-tRNA(Gln) in organisms which lack either or both of asparaginyl-tRNA or glutaminyl-tRNA synthetases. The reaction takes place in the presence of glutamine and ATP through an activated phospho-Asp-tRNA(Asn) or phospho-Glu-tRNA(Gln). The chain is Aspartyl/glutamyl-tRNA(Asn/Gln) amidotransferase subunit B from Mycoplasma mycoides subsp. mycoides SC (strain CCUG 32753 / NCTC 10114 / PG1).